The following is a 193-amino-acid chain: ATP-dependent Clp protease proteolytic subunit (193 aa).

Catalysis depends on S98, which acts as the Nucleophile. Residue H123 is part of the active site.

This sequence belongs to the peptidase S14 family. Fourteen ClpP subunits assemble into 2 heptameric rings which stack back to back to give a disk-like structure with a central cavity, resembling the structure of eukaryotic proteasomes.

It is found in the cytoplasm. It carries out the reaction Hydrolysis of proteins to small peptides in the presence of ATP and magnesium. alpha-casein is the usual test substrate. In the absence of ATP, only oligopeptides shorter than five residues are hydrolyzed (such as succinyl-Leu-Tyr-|-NHMec, and Leu-Tyr-Leu-|-Tyr-Trp, in which cleavage of the -Tyr-|-Leu- and -Tyr-|-Trp bonds also occurs).. Functionally, cleaves peptides in various proteins in a process that requires ATP hydrolysis. Has a chymotrypsin-like activity. Plays a major role in the degradation of misfolded proteins. The polypeptide is ATP-dependent Clp protease proteolytic subunit (Pasteurella multocida (strain Pm70)).